A 592-amino-acid polypeptide reads, in one-letter code: N-acetyltransferase ESCO2 (592 aa).

S41 and S85 each carry phosphoserine. The interval 267 to 294 (KSSVKVQNARSKNEEKLRKNPSGAVVSS) is disordered. S309 carries the post-translational modification Phosphoserine. Residues 384-408 (TVCKSCGMIYTASNPEDEIQHLQHH) form a CCHH-type zinc finger.

Belongs to the acetyltransferase family. ECO subfamily.

It is found in the nucleus. Its subcellular location is the chromosome. The catalysed reaction is L-lysyl-[protein] + acetyl-CoA = N(6)-acetyl-L-lysyl-[protein] + CoA + H(+). In terms of biological role, acetyltransferase required for the establishment of sister chromatid cohesion. Couples the processes of cohesion and DNA replication to ensure that only sister chromatids become paired together. In contrast to the structural cohesins, the deposition and establishment factors are required only during the S phase. Acetylates the cohesin component SMC3. This is N-acetyltransferase ESCO2 (Esco2) from Mus musculus (Mouse).